The sequence spans 107 residues: Ferredoxin-6 (107 aa).

One can recognise a 2Fe-2S ferredoxin-type domain in the interval 2-106; it reads AKIIFIEHNG…GLVVHLPEKQ (105 aa). Residues cysteine 40, cysteine 46, cysteine 49, and cysteine 87 each contribute to the [2Fe-2S] cluster site.

This sequence belongs to the adrenodoxin/putidaredoxin family. [2Fe-2S] cluster is required as a cofactor.

In terms of biological role, ferredoxins are small electron carrier proteins that participate in various redox reactions. FdVI is an essential protein required for growth of R.capsulatus. May be involved in Fe-S cluster assembly. The polypeptide is Ferredoxin-6 (Rhodobacter capsulatus (Rhodopseudomonas capsulata)).